Here is a 2625-residue protein sequence, read N- to C-terminus: Highly reducing polyketide synthase frbB (2625 aa).

Positions 1 to 10 are enriched in basic and acidic residues; the sequence is MRNIDEHMSE. The tract at residues 1–25 is disordered; it reads MRNIDEHMSERATLQSSGGYGERDS. Residues 27–449 form the Ketosynthase family 3 (KS3) domain; it reads VEPIAIIGMS…GTNAHVILDR (423 aa). Active-site for beta-ketoacyl synthase activity residues include Cys200, His334, and His375. Positions 563 to 883 are malonyl-CoA:ACP transacylase (MAT) domain; the sequence is YVFSGQGAQY…DAASTLLTTI (321 aa). Residues 942–1080 are N-terminal hotdog fold; it reads HELLGNMSTD…GRIRAVLDDS (139 aa). The dehydratase (DH) domain stretch occupies residues 942 to 1252; sequence HELLGNMSTD…GMILAKLPGG (311 aa). In terms of domain architecture, PKS/mFAS DH spans 942-1255; the sequence is HELLGNMSTD…LAKLPGGTSR (314 aa). The Proton acceptor; for dehydratase activity role is filled by His974. The C-terminal hotdog fold stretch occupies residues 1102–1255; it reads VRFVSPSAFY…LAKLPGGTSR (154 aa). Asp1167 functions as the Proton donor; for dehydratase activity in the catalytic mechanism. The interval 1490 to 1673 is methyltransferase (CMet) domain; it reads YHQIKAYIAE…GFVDTEPVFR (184 aa). The tract at residues 1907-2220 is enoyl reductase (ER) domain; sequence GLLETFHWKP…SGKHIGKVIL (314 aa). The ketoreductase (KR) domain stretch occupies residues 2261-2439; the sequence is AVYIVVGGLG…GYSINIGPVS (179 aa). One can recognise a Carrier domain in the interval 2542–2619; sequence GAEAAVLTAI…HLARLAAEES (78 aa). Ser2579 is subject to O-(pantetheine 4'-phosphoryl)serine.

The protein operates within antifungal biosynthesis. Its function is as follows. Highly reducing polyketide synthase; part of the gene cluster that mediates the biosynthesis of the antifungal antibiotic FR901469, an inhibitor of beta-1,3-glucansynthase, exerting antifungal activity against the pathogenes Candida albicans and Aspergillus fumigatus. FR901469 is a cyclic depsipeptide containing 12 amino acid residues and a fatty acid chain. The NRPS frbI contains 12 modules responsible for the formation of the depsipeptide backbone which is denoted as Acyl-Thr-Ala-Tyr-Val-4OHPro-Thr-Thr-3OHPro-threo3OHGln-Gly-Thr-Orn-OH (C71H116N14O23). The PKS frbB is probably involved in the production of the hydrocarbon chain, and the acyl-CoA ligase frbC might be involved in the transport of the chain to the peptide ptoduct of frbI. Because FR901469 contains 3 hydroxylated amino acid residues, the 3 oxygenases frbA, frbH, and frbJ might be participating in amino acid hydroxylation. As no thioesterase domains were detected in frbI or frbB, the thioesterases frbD and frbE may instead release and cyclize the products of the NRPS and PKS, respectively. This is Highly reducing polyketide synthase frbB from Dothideomycetidae sp. (strain 11243) (Fungal sp. (strain No.11243)).